The primary structure comprises 540 residues: Bifunctional pantoate ligase/cytidylate kinase (540 aa).

The tract at residues 1-280 is pantoate--beta-alanine ligase; sequence MQWLRTVAAL…VGQTRLIDNL (280 aa). 28 to 35 is a binding site for ATP; that stretch reads MGSLHEGH. The active-site Proton donor is the His35. Gln59 provides a ligand contact to (R)-pantoate. Gln59 is a binding site for beta-alanine. Residue 150–153 participates in ATP binding; sequence GQKD. Gln156 is a binding site for (R)-pantoate. ATP contacts are provided by residues Val179 and 187 to 190; that span reads YSSR. The interval 281–540 is cytidylate kinase; sequence LLSPEGVDPL…RSGAAHFDII (260 aa). Residues 288–307 form a disordered region; the sequence is DPLPQEQQSAVPPSPKRGRR.

This sequence in the N-terminal section; belongs to the pantothenate synthetase family. In the C-terminal section; belongs to the cytidylate kinase family. Type 1 subfamily.

Its subcellular location is the cytoplasm. The enzyme catalyses (R)-pantoate + beta-alanine + ATP = (R)-pantothenate + AMP + diphosphate + H(+). It carries out the reaction CMP + ATP = CDP + ADP. It catalyses the reaction dCMP + ATP = dCDP + ADP. Its pathway is cofactor biosynthesis; (R)-pantothenate biosynthesis; (R)-pantothenate from (R)-pantoate and beta-alanine: step 1/1. Catalyzes the condensation of pantoate with beta-alanine in an ATP-dependent reaction via a pantoyl-adenylate intermediate. Its function is as follows. Catalyzes the transfer of a phosphate group from ATP to either CMP or dCMP to form CDP or dCDP and ADP, respectively. The protein is Bifunctional pantoate ligase/cytidylate kinase of Synechococcus sp. (strain JA-3-3Ab) (Cyanobacteria bacterium Yellowstone A-Prime).